The sequence spans 187 residues: RNA pyrophosphohydrolase (187 aa).

Positions Gly-6–Thr-149 constitute a Nudix hydrolase domain. Residues Gly-38 to Gly-59 carry the Nudix box motif. The tract at residues Ala-166 to Ser-187 is disordered.

Belongs to the Nudix hydrolase family. RppH subfamily. The cofactor is a divalent metal cation.

Functionally, accelerates the degradation of transcripts by removing pyrophosphate from the 5'-end of triphosphorylated RNA, leading to a more labile monophosphorylated state that can stimulate subsequent ribonuclease cleavage. In Nitrosomonas europaea (strain ATCC 19718 / CIP 103999 / KCTC 2705 / NBRC 14298), this protein is RNA pyrophosphohydrolase.